The chain runs to 300 residues: N-acetylmuramic acid 6-phosphate etherase 2 (300 aa).

Residues 57–220 (ITAAFANGGR…TTGAMIRSGK (164 aa)) form the SIS domain. Glu85 (proton donor) is an active-site residue. Glu116 is an active-site residue.

This sequence belongs to the GCKR-like family. MurNAc-6-P etherase subfamily. As to quaternary structure, homodimer.

The enzyme catalyses N-acetyl-D-muramate 6-phosphate + H2O = N-acetyl-D-glucosamine 6-phosphate + (R)-lactate. It functions in the pathway amino-sugar metabolism; 1,6-anhydro-N-acetylmuramate degradation. The protein operates within amino-sugar metabolism; N-acetylmuramate degradation. It participates in cell wall biogenesis; peptidoglycan recycling. Functionally, specifically catalyzes the cleavage of the D-lactyl ether substituent of MurNAc 6-phosphate, producing GlcNAc 6-phosphate and D-lactate. Together with AnmK, is also required for the utilization of anhydro-N-acetylmuramic acid (anhMurNAc) either imported from the medium or derived from its own cell wall murein, and thus plays a role in cell wall recycling. The protein is N-acetylmuramic acid 6-phosphate etherase 2 of Vibrio parahaemolyticus serotype O3:K6 (strain RIMD 2210633).